The sequence spans 388 residues: MNLHEYQAKQLFADYGLPVSKGFACESAQEAMSAADSIGGSQWVVKAQVHAGGRGKAGGVKLVSSKEEIKAFAEKWLGHNLVTYQTDEKGQPVNKILVESCTDIDQELYLGAVMDRGTRRIVFMASTEGGVEIEKVAEETPEKILKAVIDPLVGAQPYQARELAFALGLNSDQVKQFTKIFLGLAKLFQDLDLALLEVNPLVITKGGNLHCLDAKVVVDGNALYRQPRIRDMHDPSQEDPREAHAAKWELNYVALEGNIGCMVNGAGLAMGTMDIVKLHGGAPANFLDVGGGATKERVTEAFKIILSDDNVKAVLVNIFGGIVRCDLIADGIIGAVEEVGVKIPVVVRLEGNNAELGAKKLADSGLNIIAAESLTHAAEAVVKAAEGK.

Positions lysine 9–histidine 244 constitute an ATP-grasp domain. ATP-binding positions include lysine 46, glycine 53 to glycine 55, glutamate 99, threonine 102, and glutamate 107. Positions 199 and 213 each coordinate Mg(2+). Residues asparagine 264 and glycine 321 to valine 323 contribute to the substrate site.

The protein belongs to the succinate/malate CoA ligase beta subunit family. Heterotetramer of two alpha and two beta subunits. Mg(2+) serves as cofactor.

The enzyme catalyses succinate + ATP + CoA = succinyl-CoA + ADP + phosphate. It catalyses the reaction GTP + succinate + CoA = succinyl-CoA + GDP + phosphate. It functions in the pathway carbohydrate metabolism; tricarboxylic acid cycle; succinate from succinyl-CoA (ligase route): step 1/1. Functionally, succinyl-CoA synthetase functions in the citric acid cycle (TCA), coupling the hydrolysis of succinyl-CoA to the synthesis of either ATP or GTP and thus represents the only step of substrate-level phosphorylation in the TCA. The beta subunit provides nucleotide specificity of the enzyme and binds the substrate succinate, while the binding sites for coenzyme A and phosphate are found in the alpha subunit. The protein is Succinate--CoA ligase [ADP-forming] subunit beta of Hahella chejuensis (strain KCTC 2396).